The chain runs to 711 residues: Dendrin (711 aa).

4 disordered regions span residues M1–S22, A49–L273, D324–L446, and P479–S677. The segment covering P75 to R84 has biased composition (pro residues). Residues L102 to G134 are a coiled coil. The span at V105–R127 shows a compositional bias: basic and acidic residues. The nuclear localization stretch occupies residues R113 to K131. Residues A150–A161 are compositionally biased toward low complexity. The segment at G186–P236 is interaction with MAGI2. 2 stretches are compositionally biased toward low complexity: residues P252 to A262 and A346 to C356. The segment at A341–A436 is interaction with ACTN1. S389 is subject to Phosphoserine. Residues G408–K709 are interaction with CD2AP and NPHS1. Residues G529 to F546 show a composition bias toward basic and acidic residues.

As to quaternary structure, forms a ternary complex with MAGI2 and SH3KBP1; recruits DDN to the cytoplasm. Interacts with MAGI1. Interacts with ACTN1 and may interact with WWC1. Interacts with the podocyte slit diaphragm proteins CD2AP, NPHS1 and NPHS2; the interaction with CD2AP and NPHS1 is direct. As to expression, specifically expressed in brain and kidney. Expressed in kidney glomerular capillary loops (at protein level).

It is found in the cell projection. Its subcellular location is the dendritic spine membrane. The protein localises to the cytoplasm. It localises to the endoplasmic reticulum membrane. The protein resides in the perikaryon. It is found in the nucleus. Its function is as follows. Promotes apoptosis of kidney glomerular podocytes. Podocytes are highly specialized cells essential to the ultrafiltration of blood, resulting in the extraction of urine and the retention of protein. In Homo sapiens (Human), this protein is Dendrin (DDN).